We begin with the raw amino-acid sequence, 141 residues long: Histone H2B (141 aa).

Positions 1–10 are enriched in basic and acidic residues; sequence MAPKAAEKKP. The tract at residues 1–49 is disordered; that stretch reads MAPKAAEKKPSTGGKAPAGGKAPAEKKEAGKKTAAAASGDKKKRGKTRK. Residues lysine 8 and lysine 9 each carry the N6-acetyllysine; alternate modification. Residues lysine 8 and lysine 9 each participate in a glycyl lysine isopeptide (Lys-Gly) (interchain with G-Cter in SUMO); alternate cross-link. Positions 11–22 are enriched in low complexity; that stretch reads STGGKAPAGGKA. Residue lysine 15 is modified to N6-acetyllysine. Lysine 26 bears the N6-acetyllysine; alternate mark. Residue lysine 26 forms a Glycyl lysine isopeptide (Lys-Gly) (interchain with G-Cter in SUMO); alternate linkage. A Glycyl lysine isopeptide (Lys-Gly) (interchain with G-Cter in SUMO) cross-link involves residue lysine 27. Lysine 135 participates in a covalent cross-link: Glycyl lysine isopeptide (Lys-Gly) (interchain with G-Cter in ubiquitin).

It belongs to the histone H2B family. The nucleosome is a histone octamer containing two molecules each of H2A, H2B, H3 and H4 assembled in one H3-H4 heterotetramer and two H2A-H2B heterodimers. The octamer wraps approximately 147 bp of DNA. Post-translationally, monoubiquitinated by the ubc2-bre1 complex to form H2BK123ub1. H2BK123ub1 gives a specific tag for epigenetic transcriptional activation and is also prerequisite for H3K4me and H3K79me formation. H2BK123ub1 also modulates the formation of double-strand breaks during meiosis and is a prerequisite for DNA-damage checkpoint activation. In terms of processing, acetylated by gcn5 to form H2BK11ac and H2BK16ac. H2BK16ac can also be formed by esa1. Acetylation of N-terminal lysines and particularly formation of H2BK11acK16ac has a positive effect on transcription. Sumoylation to form H2BK6su or H2BK7su, and probably also H2BK16su or H2BK17su, occurs preferentially near the telomeres and represses gene transcription.

The protein resides in the nucleus. It localises to the chromosome. Its function is as follows. Core component of nucleosome. Nucleosomes wrap and compact DNA into chromatin, limiting DNA accessibility to the cellular machineries which require DNA as a template. Histones thereby play a central role in transcription regulation, DNA repair, DNA replication and chromosomal stability. DNA accessibility is regulated via a complex set of post-translational modifications of histones, also called histone code, and nucleosome remodeling. This is Histone H2B (htb1) from Aspergillus oryzae (strain ATCC 42149 / RIB 40) (Yellow koji mold).